Here is a 286-residue protein sequence, read N- to C-terminus: Putative WUSCHEL-related homeobox 2 (286 aa).

Disordered regions lie at residues 1–25 (MAPA…VGST) and 128–152 (SSSS…SPTT). A DNA-binding region (homeobox; WUS-type) is located at residues 23 to 87 (GSTTRWCPTP…NHKARDRQKL (65 aa)).

It belongs to the WUS homeobox family.

It is found in the nucleus. Functionally, transcription factor which may be involved in developmental processes. The chain is Putative WUSCHEL-related homeobox 2 (WOX2) from Oryza sativa subsp. indica (Rice).